The sequence spans 253 residues: MANLGCWMLVLFVATWSNLGLCKKRPKPGGWNTGGSRYPGQGSPGGNRYPPQGGGGWGQPHGGGWGQPHGGGWGQPHGGGWGQPHGGGWGQGGGTHSQWNKPSKPKTNMKHMAGAAAAGAVVGGLGGYMLGSAMSRPIIHFGNDYEDRYYRENMYRYPNQVYYRPVDQYSNQNNFVHDCVNITIKQHTVTTTTKGENFTETDVKMMERVVEQMCITQYERESQAYYQRGSSMVLFSSPPVILLISFLIFLIVG.

The first 22 residues, 1-22 (MANLGCWMLVLFVATWSNLGLC), serve as a signal peptide directing secretion. Residues 23 to 38 (KKRPKPGGWNTGGSRY) form an interaction with ADGRG6 region. The interaction with GRB2, ERI3 and SYN1 stretch occupies residues 23 to 230 (KKRPKPGGWN…ESQAYYQRGS (208 aa)). Residues 25–108 (RPKPGGWNTG…WNKPSKPKTN (84 aa)) form a disordered region. Repeat copies occupy residues 51-59 (PQGGGGWGQ), 60-67 (PHGGGWGQ), 68-75 (PHGGGWGQ), 76-83 (PHGGGWGQ), and 84-91 (PHGGGWGQ). Positions 51–91 (PQGGGGWGQPHGGGWGQPHGGGWGQPHGGGWGQPHGGGWGQ) are 5 X 8 AA tandem repeats of P-H-G-G-G-W-G-Q. The span at 52–95 (QGGGGWGQPHGGGWGQPHGGGWGQPHGGGWGQPHGGGWGQGGGT) shows a compositional bias: gly residues. 12 residues coordinate Cu(2+): histidine 61, glycine 62, glycine 63, histidine 69, glycine 70, glycine 71, histidine 77, glycine 78, glycine 79, histidine 85, glycine 86, and glycine 87. Cysteine 179 and cysteine 214 are joined by a disulfide. Residues asparagine 181 and asparagine 197 are each glycosylated (N-linked (GlcNAc...) asparagine). The GPI-anchor amidated serine moiety is linked to residue serine 230. Residues 231–253 (SMVLFSSPPVILLISFLIFLIVG) constitute a propeptide, removed in mature form.

It belongs to the prion family. Monomer and homodimer. Has a tendency to aggregate into amyloid fibrils containing a cross-beta spine, formed by a steric zipper of superposed beta-strands. Soluble oligomers may represent an intermediate stage on the path to fibril formation. Copper binding may promote oligomerization. Interacts with GRB2, APP, ERI3/PRNPIP and SYN1. Mislocalized cytosolically exposed PrP interacts with MGRN1; this interaction alters MGRN1 subcellular location and causes lysosomal enlargement. Interacts with APP. Interacts with KIAA1191. Interacts with ADGRG6.

It localises to the cell membrane. The protein localises to the golgi apparatus. In terms of biological role, its primary physiological function is unclear. May play a role in neuronal development and synaptic plasticity. May be required for neuronal myelin sheath maintenance. May promote myelin homeostasis through acting as an agonist for ADGRG6 receptor. May play a role in iron uptake and iron homeostasis. Soluble oligomers are toxic to cultured neuroblastoma cells and induce apoptosis (in vitro). Association with GPC1 (via its heparan sulfate chains) targets PRNP to lipid rafts. Also provides Cu(2+) or Zn(2+) for the ascorbate-mediated GPC1 deaminase degradation of its heparan sulfate side chains. The sequence is that of Major prion protein (PRNP) from Pongo pygmaeus (Bornean orangutan).